A 132-amino-acid chain; its full sequence is Replication enhancer protein (132 aa).

This sequence belongs to the geminiviridae replication enhancer protein family. As to quaternary structure, homooligomer. Interacts with the replication-associated protein (REP). Interacts with host proliferating cell nuclear antigen (PCNA). Interacts with host retinoblastoma-related protein 1 (RBR1), and may thereby deregulate the host cell cycle. Oligomerization and interaction with PCNA are necessary for optimal replication enhancement.

Functionally, increases viral DNA accumulation. Enhances infectivity and symptom expression. In Tomato mottle virus (isolate Florida) (ToMoV), this protein is Replication enhancer protein.